A 243-amino-acid chain; its full sequence is Ribosomal RNA small subunit methyltransferase J (243 aa).

Residues 112–113 (ER) and aspartate 164 contribute to the S-adenosyl-L-methionine site.

This sequence belongs to the methyltransferase superfamily. RsmJ family.

Its subcellular location is the cytoplasm. It catalyses the reaction guanosine(1516) in 16S rRNA + S-adenosyl-L-methionine = N(2)-methylguanosine(1516) in 16S rRNA + S-adenosyl-L-homocysteine + H(+). Its function is as follows. Specifically methylates the guanosine in position 1516 of 16S rRNA. The chain is Ribosomal RNA small subunit methyltransferase J from Legionella pneumophila (strain Paris).